A 227-amino-acid polypeptide reads, in one-letter code: 6-phosphogluconolactonase (227 aa).

The protein belongs to the glucosamine/galactosamine-6-phosphate isomerase family. 6-phosphogluconolactonase subfamily.

The enzyme catalyses 6-phospho-D-glucono-1,5-lactone + H2O = 6-phospho-D-gluconate + H(+). It functions in the pathway carbohydrate degradation; pentose phosphate pathway; D-ribulose 5-phosphate from D-glucose 6-phosphate (oxidative stage): step 2/3. In terms of biological role, hydrolysis of 6-phosphogluconolactone to 6-phosphogluconate. The polypeptide is 6-phosphogluconolactonase (pgl) (Helicobacter pylori (strain ATCC 700392 / 26695) (Campylobacter pylori)).